A 346-amino-acid polypeptide reads, in one-letter code: Ly6/PLAUR domain-containing protein 3 (346 aa).

The first 30 residues, 1-30 (MDPARKAGAQAMIWTAGWLLLLLLRGGAQA), serve as a signal peptide directing secretion. UPAR/Ly6 domains lie at 33–126 (CYSC…ALDP) and 140–222 (CYSC…SRCN). Residues Asn-118, Asn-163, Asn-176, and Asn-183 are each glycosylated (N-linked (GlcNAc...) asparagine). The tract at residues 233–324 (PRIPPLVRLP…KGGPQQPHNK (92 aa)) is disordered. A compositionally biased stretch (pro residues) spans 234–246 (RIPPLVRLPPPEP). A compositionally biased stretch (low complexity) spans 247–269 (TTVASTTSVTTSTSAPVRPTSTT). Positions 283–295 (GVEHEASRDEEPR) are enriched in basic and acidic residues. Residue Cys-326 is the site of GPI-anchor amidated cysteine attachment. A propeptide spans 327 to 346 (VAPTAGLAALLLAVAAGVLL) (removed in mature form).

In terms of assembly, binds laminin-1 and laminin-5. Interacts with LGALS3. Interacts with AGR2 and AGR3. In terms of processing, N-glycosylated and O-glycosylated. Expressed in placenta, skin and urothelium. Found in suprabasal keratinocytes of chronic wounds. Weak expression is found in esophagus and peripheral blood mononuclear cells. Found in the majority of primary and metastatic transitional cell carcinomas (TCCs) and as well in breast cancer tissues, but not in adjacent normal tissues. High expression is found in the tumor component of some noninvasive superficial lesions and in invasive and metastatic urothelial cancers.

The protein localises to the cell membrane. Supports cell migration. May be involved in urothelial cell-matrix interactions. May be involved in tumor progression. This Homo sapiens (Human) protein is Ly6/PLAUR domain-containing protein 3 (LYPD3).